Reading from the N-terminus, the 502-residue chain is ATP synthase subunit alpha (502 aa).

An ATP-binding site is contributed by 169–176 (GDRQTGKT).

This sequence belongs to the ATPase alpha/beta chains family. In terms of assembly, F-type ATPases have 2 components, CF(1) - the catalytic core - and CF(0) - the membrane proton channel. CF(1) has five subunits: alpha(3), beta(3), gamma(1), delta(1), epsilon(1). CF(0) has three main subunits: a(1), b(2) and c(9-12). The alpha and beta chains form an alternating ring which encloses part of the gamma chain. CF(1) is attached to CF(0) by a central stalk formed by the gamma and epsilon chains, while a peripheral stalk is formed by the delta and b chains.

The protein resides in the cell inner membrane. The enzyme catalyses ATP + H2O + 4 H(+)(in) = ADP + phosphate + 5 H(+)(out). In terms of biological role, produces ATP from ADP in the presence of a proton gradient across the membrane. The alpha chain is a regulatory subunit. This is ATP synthase subunit alpha from Nitratidesulfovibrio vulgaris (strain ATCC 29579 / DSM 644 / CCUG 34227 / NCIMB 8303 / VKM B-1760 / Hildenborough) (Desulfovibrio vulgaris).